A 440-amino-acid polypeptide reads, in one-letter code: 6-phospho-alpha-glucosidase (440 aa).

4-70 (FSIVVAGGGS…PDINFVYTTD (67 aa)) is an NAD(+) binding site. Substrate contacts are provided by Arg93 and Asn147. Mn(2+) is bound at residue Cys169. The active-site Proton donor is the Asp170. His200 is a binding site for Mn(2+). Tyr263 serves as the catalytic Proton acceptor. Arg283 is a binding site for substrate.

This sequence belongs to the glycosyl hydrolase 4 family. As to quaternary structure, homodimer. It depends on NAD(+) as a cofactor. Mn(2+) serves as cofactor.

It participates in glycan degradation; palatinose degradation. In terms of biological role, in vitro, readily hydrolyzes p-nitrophenyl-alpha-D-glucopyranoside 6-phosphate (pNPalphaG6P), a chromogenic analog of the phosphorylated isomers of sucrose. In vivo, is probably involved in the degradation of the 6-phosphate derivatives of the sucrose isomers trehalulose, turanose, maltulose and palatinose, catalyzing their hydrolysis into glucose 6-phosphate (G6P) and fructose, which allows the bacterium to use these sugars as energy sources for growth. Is not able to hydrolyze the C2 or C4 chromogenic stereomers (i.e. pNPalpha-mannopyranoside-6P and pNPalpha-galactopyranoside-6P, respectively). The polypeptide is 6-phospho-alpha-glucosidase (pagL) (Leptotrichia buccalis (strain ATCC 14201 / DSM 1135 / JCM 12969 / NCTC 10249 / C-1013-b)).